Consider the following 281-residue polypeptide: RAD52 motif-containing protein 1 (281 aa).

The segment at 1 to 92 is necessary for nuclear localization and for nucleolar accumulation in response to heat shock; it reads MAELISFVVP…KPLFQTSPVK (92 aa). Residues 15–98 enclose the RRM domain; sequence KVLLVWDLST…SPVKVRLGTR (84 aa). Residues 90–133 form a necessary for nuclear and nucleolar localization region; that stretch reads PVKVRLGTRHKALQHQAFALNSSRCQELANYYFGFSGWSKRIIK.

As to quaternary structure, homodimer.

Its subcellular location is the nucleus. The protein resides in the cytoplasm. It is found in the nucleolus. It localises to the cajal body. The protein localises to the PML body. In terms of biological role, may confer resistance to the antitumor agent cisplatin. Binds to DNA and RNA. The protein is RAD52 motif-containing protein 1 (Rdm1) of Mus musculus (Mouse).